Reading from the N-terminus, the 146-residue chain is Large ribosomal subunit protein uL15 (146 aa).

Residues 1–51 (MKLHELQPAAGSRKVRNRVGRGTSSGNGKTSGRGQKGQKARSGGGVRLGFE) form a disordered region. 2 stretches are compositionally biased toward gly residues: residues 23-35 (TSSGNGKTSGRGQ) and 42-51 (SGGGVRLGFE).

This sequence belongs to the universal ribosomal protein uL15 family. In terms of assembly, part of the 50S ribosomal subunit.

In terms of biological role, binds to the 23S rRNA. The sequence is that of Large ribosomal subunit protein uL15 from Streptococcus sanguinis (strain SK36).